A 280-amino-acid polypeptide reads, in one-letter code: Phosphatidylglycerol--prolipoprotein diacylglyceryl transferase (280 aa).

The next 3 membrane-spanning stretches (helical) occupy residues 19–39, 56–76, and 90–110; these read LSVR…YFVA, IIFY…VIFQ, and IWHG…AGVI. R138 lines the a 1,2-diacyl-sn-glycero-3-phospho-(1'-sn-glycerol) pocket. Helical transmembrane passes span 204-224 and 236-256; these read LGET…FIEG and IRVA…LIVY.

The protein belongs to the Lgt family.

The protein resides in the cell membrane. The catalysed reaction is L-cysteinyl-[prolipoprotein] + a 1,2-diacyl-sn-glycero-3-phospho-(1'-sn-glycerol) = an S-1,2-diacyl-sn-glyceryl-L-cysteinyl-[prolipoprotein] + sn-glycerol 1-phosphate + H(+). Its pathway is protein modification; lipoprotein biosynthesis (diacylglyceryl transfer). Catalyzes the transfer of the diacylglyceryl group from phosphatidylglycerol to the sulfhydryl group of the N-terminal cysteine of a prolipoprotein, the first step in the formation of mature lipoproteins. The chain is Phosphatidylglycerol--prolipoprotein diacylglyceryl transferase from Staphylococcus aureus (strain MRSA252).